A 338-amino-acid chain; its full sequence is Mitochondrial genome maintenance exonuclease 1 (338 aa).

Residues 1-64 (MKLPLTFCRL…RSVLSRGPAQ (64 aa)) constitute a mitochondrion transit peptide. Active-site residues include Asp235, Asp248, and Lys250.

The protein belongs to the MGME1 family.

It is found in the mitochondrion. Functionally, metal-dependent single-stranded DNA (ssDNA) exonuclease involved in mitochondrial genome maintenance. Has preference for 5'-3' exonuclease activity but is also capable of endonuclease activity on linear substrates. Necessary for maintenance of proper 7S DNA levels. Probably involved in mitochondrial DNA (mtDNA) repair, possibly via the processing of displaced DNA containing Okazaki fragments during RNA-primed DNA synthesis on the lagging strand or via processing of DNA flaps during long-patch base excision repair. Specifically binds 5-hydroxymethylcytosine (5hmC)-containing DNA in stem cells. This is Mitochondrial genome maintenance exonuclease 1 (Mgme1) from Mus musculus (Mouse).